Reading from the N-terminus, the 98-residue chain is NADH-ubiquinone oxidoreductase chain 4L (98 aa).

The next 3 helical transmembrane spans lie at M1 to F21, A29 to L49, and V58 to L78.

It belongs to the complex I subunit 4L family.

It localises to the mitochondrion membrane. It catalyses the reaction a ubiquinone + NADH + 5 H(+)(in) = a ubiquinol + NAD(+) + 4 H(+)(out). Core subunit of the mitochondrial membrane respiratory chain NADH dehydrogenase (Complex I) which catalyzes electron transfer from NADH through the respiratory chain, using ubiquinone as an electron acceptor. Part of the enzyme membrane arm which is embedded in the lipid bilayer and involved in proton translocation. The sequence is that of NADH-ubiquinone oxidoreductase chain 4L (MT-ND4L) from Salmo salar (Atlantic salmon).